We begin with the raw amino-acid sequence, 354 residues long: Elongation factor Ts (354 aa).

An involved in Mg(2+) ion dislocation from EF-Tu region spans residues 81–84 (TDFV).

The protein belongs to the EF-Ts family.

The protein resides in the cytoplasm. Associates with the EF-Tu.GDP complex and induces the exchange of GDP to GTP. It remains bound to the aminoacyl-tRNA.EF-Tu.GTP complex up to the GTP hydrolysis stage on the ribosome. The protein is Elongation factor Ts of Campylobacter concisus (strain 13826).